Reading from the N-terminus, the 416-residue chain is Probable mannose-6-phosphate isomerase (416 aa).

Zn(2+) contacts are provided by glutamine 99, histidine 101, glutamate 126, and histidine 259. Arginine 278 is an active-site residue.

This sequence belongs to the mannose-6-phosphate isomerase type 1 family. Zn(2+) is required as a cofactor.

Its subcellular location is the cytoplasm. It carries out the reaction D-mannose 6-phosphate = D-fructose 6-phosphate. Its pathway is nucleotide-sugar biosynthesis; GDP-alpha-D-mannose biosynthesis; alpha-D-mannose 1-phosphate from D-fructose 6-phosphate: step 1/2. Its function is as follows. Involved in the synthesis of the GDP-mannose and dolichol-phosphate-mannose required for a number of critical mannosyl transfer reactions. This Caenorhabditis elegans protein is Probable mannose-6-phosphate isomerase.